Reading from the N-terminus, the 1905-residue chain is Transport and Golgi organization protein 1 homolog (1905 aa).

An N-terminal signal peptide occupies residues Met-1–Gly-22. Residues Gln-23–Asn-1141 lie on the Lumenal side of the membrane. Residues Met-45–Glu-107 enclose the SH3 domain. Over residues Ser-154 to Glu-167 the composition is skewed to basic and acidic residues. Disordered regions lie at residues Ser-154 to Glu-259 and Thr-313 to Arg-621. An N-linked (GlcNAc...) asparagine glycan is attached at Asn-173. Residues Asn-173–Glu-190 show a composition bias toward acidic residues. The span at Ala-198 to Lys-208 shows a compositional bias: basic and acidic residues. The span at Ser-209 to Ala-220 shows a compositional bias: polar residues. Phosphoserine is present on residues Ser-226 and Ser-229. A compositionally biased stretch (basic and acidic residues) spans Leu-234–Asn-245. N-linked (GlcNAc...) asparagine glycosylation occurs at Asn-246. The span at Asn-246 to Ser-255 shows a compositional bias: polar residues. The segment covering Glu-317–Glu-327 has biased composition (acidic residues). 2 stretches are compositionally biased toward basic and acidic residues: residues Glu-337–Glu-366 and Lys-373–Thr-386. A compositionally biased stretch (acidic residues) spans Met-392 to Leu-414. Basic and acidic residues-rich tracts occupy residues Arg-419–Asp-436 and His-459–Gly-480. Residues Val-467–Ala-527 are a coiled coil. Residues Asp-488–Leu-500 are compositionally biased toward polar residues. Residues Ile-531–Ser-542 are compositionally biased toward basic and acidic residues. A glycan (N-linked (GlcNAc...) asparagine) is linked at Asn-627. 3 disordered regions span residues Gln-657–Pro-908, Ala-1036–Leu-1059, and Pro-1085–Asp-1118. Basic and acidic residues predominate over residues Val-669 to Asn-714. The span at Pro-715–Asn-730 shows a compositional bias: acidic residues. 4 stretches are compositionally biased toward basic and acidic residues: residues Gln-736 to Val-751, Thr-766 to Thr-789, Ser-842 to Pro-859, and Pro-868 to Val-884. Phosphoserine is present on Ser-873. An intramembrane segment occupies Ala-1142–Pro-1162. Residues Asp-1163–Gly-1173 lie on the Lumenal side of the membrane. A helical membrane pass occupies residues Leu-1174–Phe-1194. The Cytoplasmic segment spans residues Trp-1195 to Pro-1905. The segment at Val-1208–Pro-1647 is mediates interaction with MIA2. The stretch at Gln-1211–Thr-1393 forms a coiled coil. Residues Ser-1416 to Lys-1443 are disordered. Ser-1428 is modified (phosphoserine). The stretch at Asn-1484–Glu-1636 forms a coiled coil. A disordered region spans residues Ile-1639–Pro-1905. The segment covering Pro-1647–Phe-1664 has biased composition (polar residues). A phosphoserine mark is found at Ser-1663, Ser-1675, Ser-1703, Ser-1724, Ser-1738, and Ser-1742. The tract at residues Asp-1748–Pro-1905 is proline-rich domain (PRD); mediates interaction with the COPII coat subunits SEC23A and SEC23B. The span at Leu-1776–Arg-1806 shows a compositional bias: pro residues. Arg-1781 carries the asymmetric dimethylarginine modification. The SEC16A-interacting region (SIR); required for its localization to endoplasmic reticulum exit sites and for its interaction with SEC16A stretch occupies residues Pro-1785–Ser-1845. Basic and acidic residues predominate over residues Gly-1821–Glu-1831. Residues Ser-1890 and Ser-1904 each carry the phosphoserine modification. Residues Gln-1891–Pro-1905 show a composition bias toward polar residues.

It belongs to the MIA/OTOR family. Tango1 subfamily. As to quaternary structure, interacts with MIA2. Interacts (via SH3 domain) with COL7A1. Interacts with the COPII coat subunits SEC23A, SEC23B and maybe SEC24C. May interact with APOB and MIA2. Interacts with SEC16A.

The protein localises to the endoplasmic reticulum membrane. Its function is as follows. Plays a role in the transport of cargos that are too large to fit into COPII-coated vesicles and require specific mechanisms to be incorporated into membrane-bound carriers and exported from the endoplasmic reticulum. This protein is required for collagen VII (COL7A1) secretion by loading COL7A1 into transport carriers. It may participate in cargo loading of COL7A1 at endoplasmic reticulum exit sites by binding to COPII coat subunits Sec23/24 and guiding SH3-bound COL7A1 into a growing carrier. Does not play a role in global protein secretion and is apparently specific to COL7A1 cargo loading. However, it may participate in secretion of other proteins in cells that do not secrete COL7A1. It is also specifically required for the secretion of lipoproteins by participating in their export from the endoplasmic reticulum. Required for correct assembly of COPII coat components at endoplasmic reticulum exit sites (ERES) and for the localization of SEC16A and membrane-bound ER-resident complexes consisting of MIA2 and PREB/SEC12 to ERES. This chain is Transport and Golgi organization protein 1 homolog, found in Bos taurus (Bovine).